A 153-amino-acid polypeptide reads, in one-letter code: Superoxide dismutase [Cu-Zn] (153 aa).

Cu cation is bound by residues His46, His48, and His63. A disulfide bridge links Cys57 with Cys146. Positions 63, 71, 80, and 83 each coordinate Zn(2+). Cu cation is bound at residue His120.

This sequence belongs to the Cu-Zn superoxide dismutase family. As to quaternary structure, homodimer. Cu cation is required as a cofactor. Zn(2+) serves as cofactor.

It localises to the cytoplasm. The catalysed reaction is 2 superoxide + 2 H(+) = H2O2 + O2. In terms of biological role, destroys radicals which are normally produced within the cells and which are toxic to biological systems. The protein is Superoxide dismutase [Cu-Zn] (SODCC) of Solidago canadensis var. scabra (Tall goldenrod).